We begin with the raw amino-acid sequence, 640 residues long: MPTITLPDGSQRAFDHAVSVADVAASIGAGLAKATVAGKVDGKLVDACELITHDATLQIITPKDEEGLEIIRHSCAHLVGHAVKQLYPTAKMVIGPVIDEGFYYDIAYERSFTPEDLAAIEKRMQQLIEKDYDVIKKMTPRAEVIDVFKARGEDYKLRLVEDMPDEQAMGLYYHEEYVDMCRGPHVPNTRFLKAFKLTKLSGAYWRGDAKNEQLQRVYGTAWADKKQLAAYIQRIEEAEKRDHRKIGKQLDLFHLQEEAPGMVFWHANGWTVYQVLEQYMRQVQRENGYSEIKTPQVVDRILWERSGHWSNYAENMFTTSSESRDYAVKPMNCPCHVQVFNQGLKSYRDLPLRLAEFGACHRNEPSGALHGIMRVRGFVQDDAHIFCTEDQVKKEAADFIKLTLDVYKDFGFTDVAMKLSTRPAKRVGSEELWDRAEGALADALNESGLEWEYQPGEGAFYGPKIEFTLRDCLGRNWQCGTLQYDPNLPERLDASYIAEDNARKRPVMLHRAILGSFERFIGMLIEHYAGVFPAWLAPTQAVIMNITDKQADFALQVEKSLNGSGFRAKSDLRNEKIGFKIREHTLLKVPYLLVIGDREVETQTVAVRTREGADLGSMPVAQFVELLTHAVSRRGRQESE.

The TGS domain occupies 1-61 (MPTITLPDGS…THDATLQIIT (61 aa)). A catalytic region spans residues 242–533 (DHRKIGKQLD…LIEHYAGVFP (292 aa)). Residues cysteine 333, histidine 384, and histidine 510 each coordinate Zn(2+).

The protein belongs to the class-II aminoacyl-tRNA synthetase family. As to quaternary structure, homodimer. Zn(2+) serves as cofactor.

It is found in the cytoplasm. The catalysed reaction is tRNA(Thr) + L-threonine + ATP = L-threonyl-tRNA(Thr) + AMP + diphosphate + H(+). Its function is as follows. Catalyzes the attachment of threonine to tRNA(Thr) in a two-step reaction: L-threonine is first activated by ATP to form Thr-AMP and then transferred to the acceptor end of tRNA(Thr). Also edits incorrectly charged L-seryl-tRNA(Thr). This chain is Threonine--tRNA ligase, found in Pseudomonas putida (strain W619).